We begin with the raw amino-acid sequence, 634 residues long: Probable potassium transport system protein Kup (634 aa).

Transmembrane regions (helical) follow at residues 19 to 39 (AVGL…TSPL), 62 to 82 (VLSL…VIFV), 113 to 133 (FVVV…MITP), 150 to 170 (GLEH…FLIQ), 177 to 197 (IGIL…ALGV), 225 to 245 (IGVA…ALYA), 259 to 279 (WFLL…ATIL), 291 to 311 (LLAP…ATVI), 349 to 369 (IYIG…VLGF), 379 to 399 (YGVA…VVIW), 406 to 426 (LWLG…FFAA), and 431 to 451 (VVQG…LMST).

Belongs to the HAK/KUP transporter (TC 2.A.72) family.

It localises to the cell inner membrane. It carries out the reaction K(+)(in) + H(+)(in) = K(+)(out) + H(+)(out). Transport of potassium into the cell. Likely operates as a K(+):H(+) symporter. This Pseudomonas paraeruginosa (strain DSM 24068 / PA7) (Pseudomonas aeruginosa (strain PA7)) protein is Probable potassium transport system protein Kup.